A 122-amino-acid polypeptide reads, in one-letter code: Large ribosomal subunit protein uL14 (122 aa).

Belongs to the universal ribosomal protein uL14 family. As to quaternary structure, part of the 50S ribosomal subunit. Forms a cluster with proteins L3 and L19. In the 70S ribosome, L14 and L19 interact and together make contacts with the 16S rRNA in bridges B5 and B8.

In terms of biological role, binds to 23S rRNA. Forms part of two intersubunit bridges in the 70S ribosome. The sequence is that of Large ribosomal subunit protein uL14 from Limosilactobacillus fermentum (strain NBRC 3956 / LMG 18251) (Lactobacillus fermentum).